Consider the following 953-residue polypeptide: Scaffold attachment factor B2 (953 aa).

The disordered stretch occupies residues 1-29; that stretch reads MAETLPGSGDSGPGTASLGPGVAETGTRR. A2 carries the N-acetylalanine modification. The SAP domain maps to 30–64; it reads LSELRVIDLRAELKKRNLDTGGNKSVLMERLKKAV. Position 54 is a phosphoserine (S54). K65 is covalently cross-linked (Glycyl lysine isopeptide (Lys-Gly) (interchain with G-Cter in SUMO1); alternate). K65 is covalently cross-linked (Glycyl lysine isopeptide (Lys-Gly) (interchain with G-Cter in SUMO2); alternate). The disordered stretch occupies residues 91–114; the sequence is KGLKMEEEGTEDNGLEDDSRDGQE. Residue K94 forms a Glycyl lysine isopeptide (Lys-Gly) (interchain with G-Cter in SUMO2) linkage. The segment covering 98-114 has biased composition (acidic residues); the sequence is EGTEDNGLEDDSRDGQE. Residues S109 and S158 each carry the phosphoserine modification. Residues K188 and K199 each participate in a glycyl lysine isopeptide (Lys-Gly) (interchain with G-Cter in SUMO2) cross-link. T201 bears the Phosphothreonine mark. Position 207 is a phosphoserine (S207). Residues 219-404 are disordered; it reads ILGETCKSEP…KDEKGRVGSG (186 aa). The span at 224-233 shows a compositional bias: basic and acidic residues; it reads CKSEPVKEES. A Glycyl lysine isopeptide (Lys-Gly) (interchain with G-Cter in SUMO) cross-link involves residue K230. Positions 274-285 are enriched in polar residues; sequence SESTAHAQSSKA. Positions 292 to 308 are enriched in basic and acidic residues; that stretch reads VKREPAEQPGDGERTDC. Residue K293 forms a Glycyl lysine isopeptide (Lys-Gly) (interchain with G-Cter in SUMO) linkage. The segment covering 318–329 has biased composition (low complexity); the sequence is EQSSAASELAEA. The segment covering 345–358 has biased composition (basic and acidic residues); it reads EARDSKEDGRKFDF. Residues 370-382 are compositionally biased toward polar residues; sequence ESSTSEGADQKMS. Glycyl lysine isopeptide (Lys-Gly) (interchain with G-Cter in SUMO2) cross-links involve residues K380, K385, K388, K391, and K395. Positions 383–400 are enriched in basic and acidic residues; sequence SFKEEKDIKPIIKDEKGR. The 79-residue stretch at 407 to 485 folds into the RRM domain; the sequence is RNLWVSGLSS…RMISVEKAKN (79 aa). Phosphoserine is present on residues S507 and S513. Glycyl lysine isopeptide (Lys-Gly) (interchain with G-Cter in SUMO2) cross-links involve residues K517, K524, K525, K541, K542, and K551. The segment covering 525–551 has biased composition (basic and acidic residues); that stretch reads KEEKIEKKEEKKPEDIKKEEKDQDELK. Disordered regions lie at residues 525–665 and 684–953; these read KEEK…RLQR and RERL…TRRY. A compositionally biased stretch (polar residues) spans 555–564; the sequence is TNRSRVTKSG. The segment covering 567–579 has biased composition (basic and acidic residues); it reads GMERTVVMDKSKG. Glycyl lysine isopeptide (Lys-Gly) (interchain with G-Cter in SUMO2) cross-links involve residues K578, K586, and K608. 2 stretches are compositionally biased toward basic and acidic residues: residues 590–665 and 684–820; these read RSKE…RLQR and RERL…DSRD. Residues 600–953 form an interaction with SAFB1 region; it reads DRKSESKEKR…PPYPHFTRRY (354 aa). K616 is covalently cross-linked (Glycyl lysine isopeptide (Lys-Gly) (interchain with G-Cter in SUMO2); alternate). K616 is subject to N6-acetyllysine; alternate. Residues 713–730 carry the Nuclear localization signal motif; it reads RRQQEQLRYEQERRPGRR. Phosphoserine occurs at positions 787 and 832. Basic and acidic residues predominate over residues 843–859; the sequence is GGRDWGEHNQRLEEHQA. Over residues 881–890 the composition is skewed to gly residues; that stretch reads GERGLSGPSG. At S886 the chain carries Phosphoserine. 2 positions are modified to omega-N-methylarginine: R897 and R903. Residues 899 to 927 are compositionally biased toward gly residues; it reads GVAGRGGFAQGGHSQGHVVPGGGLEGGGV.

Interacts with SAFB/SAFB1 and SCAM1. Interacts with isoform 2 SRPK1 and inhibits its activity. Expressed at high levels in the CNS and at low levels in the liver. Expressed in a wide number of breast cancer cell lines.

The protein resides in the cytoplasm. It is found in the nucleus. In terms of biological role, binds to scaffold/matrix attachment region (S/MAR) DNA. Can function as an estrogen receptor corepressor and can also inhibit cell proliferation. This chain is Scaffold attachment factor B2 (SAFB2), found in Homo sapiens (Human).